The sequence spans 700 residues: Elongation factor G (700 aa).

Residues 8-290 (ERYRNIGISA…AVVEYLPAPT (283 aa)) enclose the tr-type G domain. Residues 17–24 (AHIDAGKT), 88–92 (DTPGH), and 142–145 (NKMD) each bind GTP.

It belongs to the TRAFAC class translation factor GTPase superfamily. Classic translation factor GTPase family. EF-G/EF-2 subfamily.

It localises to the cytoplasm. In terms of biological role, catalyzes the GTP-dependent ribosomal translocation step during translation elongation. During this step, the ribosome changes from the pre-translocational (PRE) to the post-translocational (POST) state as the newly formed A-site-bound peptidyl-tRNA and P-site-bound deacylated tRNA move to the P and E sites, respectively. Catalyzes the coordinated movement of the two tRNA molecules, the mRNA and conformational changes in the ribosome. The polypeptide is Elongation factor G (Haemophilus influenzae (strain PittEE)).